The primary structure comprises 454 residues: Asparagine--tRNA ligase (454 aa).

This sequence belongs to the class-II aminoacyl-tRNA synthetase family. In terms of assembly, homodimer.

Its subcellular location is the cytoplasm. It catalyses the reaction tRNA(Asn) + L-asparagine + ATP = L-asparaginyl-tRNA(Asn) + AMP + diphosphate + H(+). The protein is Asparagine--tRNA ligase of Ureaplasma urealyticum serovar 10 (strain ATCC 33699 / Western).